A 109-amino-acid chain; its full sequence is Cell division protein ZapA (109 aa).

Residues 21–99 (PEQRDALNQA…IEQALLEQGR (79 aa)) are a coiled coil.

The protein belongs to the ZapA family. Type 1 subfamily. Homodimer. Interacts with FtsZ.

The protein localises to the cytoplasm. Functionally, activator of cell division through the inhibition of FtsZ GTPase activity, therefore promoting FtsZ assembly into bundles of protofilaments necessary for the formation of the division Z ring. It is recruited early at mid-cell but it is not essential for cell division. The sequence is that of Cell division protein ZapA from Klebsiella pneumoniae subsp. pneumoniae (strain ATCC 700721 / MGH 78578).